The following is a 116-amino-acid chain: DNA-directed RNA polymerase subunit omega (116 aa).

Belongs to the RNA polymerase subunit omega family. As to quaternary structure, the RNAP catalytic core consists of 2 alpha, 1 beta, 1 beta' and 1 omega subunit. When a sigma factor is associated with the core the holoenzyme is formed, which can initiate transcription.

It catalyses the reaction RNA(n) + a ribonucleoside 5'-triphosphate = RNA(n+1) + diphosphate. Its function is as follows. Promotes RNA polymerase assembly. Latches the N- and C-terminal regions of the beta' subunit thereby facilitating its interaction with the beta and alpha subunits. The polypeptide is DNA-directed RNA polymerase subunit omega (Hyphomonas neptunium (strain ATCC 15444)).